We begin with the raw amino-acid sequence, 694 residues long: Polyribonucleotide nucleotidyltransferase (694 aa).

The Mg(2+) site is built by D485 and D491. In terms of domain architecture, KH spans 552–611 (PRIETMQIKPNKIATVIGPGGKQIRQIIEEAGVQIDINDSGLVSISASSPQAIEKAKSII). Residues 621 to 689 (GKIYEGRVTS…EKGQYKLSHK (69 aa)) form the S1 motif domain.

It belongs to the polyribonucleotide nucleotidyltransferase family. The cofactor is Mg(2+).

It localises to the cytoplasm. The enzyme catalyses RNA(n+1) + phosphate = RNA(n) + a ribonucleoside 5'-diphosphate. Functionally, involved in mRNA degradation. Catalyzes the phosphorolysis of single-stranded polyribonucleotides processively in the 3'- to 5'-direction. The sequence is that of Polyribonucleotide nucleotidyltransferase from Chlamydia abortus (strain DSM 27085 / S26/3) (Chlamydophila abortus).